A 347-amino-acid chain; its full sequence is Probable E3 ubiquitin-protein ligase DTX3 (347 aa).

A disordered region spans residues 111 to 157 (GGEHPELHRPGPPPLRAAPLLPPGARGLPPPPPPLPPPLPPRLREDA). Residues 120 to 151 (PGPPPLRAAPLLPPGARGLPPPPPPLPPPLPP) show a composition bias toward pro residues. Residues 164–205 (CPICLGEIQNAKTLEKCRHSFCEGCITRALQVKKACPMCGRF) form an RING-type zinc finger.

The protein belongs to the Deltex family. In terms of assembly, homodimer. May form a heterodimer with other members of the Deltex family. Interacts with NOTCH1. Strongly expressed in testis and brain. Weakly expressed in kidney.

The protein localises to the cytoplasm. It carries out the reaction S-ubiquitinyl-[E2 ubiquitin-conjugating enzyme]-L-cysteine + [acceptor protein]-L-lysine = [E2 ubiquitin-conjugating enzyme]-L-cysteine + N(6)-ubiquitinyl-[acceptor protein]-L-lysine.. The protein operates within protein modification; protein ubiquitination. Its function is as follows. Regulator of Notch signaling, a signaling pathway involved in cell-cell communications that regulates a broad spectrum of cell-fate determinations. Probably acts both as a positive and negative regulator of Notch, depending on the developmental and cell context. Functions as a ubiquitin ligase protein in vitro, suggesting that it may regulate the Notch pathway via some ubiquitin ligase activity. The sequence is that of Probable E3 ubiquitin-protein ligase DTX3 (Dtx3) from Mus musculus (Mouse).